A 382-amino-acid polypeptide reads, in one-letter code: S-adenosylmethionine synthase (382 aa).

An ATP-binding site is contributed by His16. Asp18 contacts Mg(2+). Glu44 serves as a coordination point for K(+). Glu57 and Gln100 together coordinate L-methionine. Residues 100–110 form a flexible loop region; the sequence is QSADIAIGVDE. Residues 165–167, Asp240, 246–247, Ala263, and Lys267 each bind ATP; these read DAK and RK. Asp240 contributes to the L-methionine binding site. Lys271 serves as a coordination point for L-methionine.

It belongs to the AdoMet synthase family. In terms of assembly, homotetramer; dimer of dimers. Mg(2+) serves as cofactor. The cofactor is K(+).

It localises to the cytoplasm. It carries out the reaction L-methionine + ATP + H2O = S-adenosyl-L-methionine + phosphate + diphosphate. It functions in the pathway amino-acid biosynthesis; S-adenosyl-L-methionine biosynthesis; S-adenosyl-L-methionine from L-methionine: step 1/1. Catalyzes the formation of S-adenosylmethionine (AdoMet) from methionine and ATP. The overall synthetic reaction is composed of two sequential steps, AdoMet formation and the subsequent tripolyphosphate hydrolysis which occurs prior to release of AdoMet from the enzyme. This chain is S-adenosylmethionine synthase, found in Alcanivorax borkumensis (strain ATCC 700651 / DSM 11573 / NCIMB 13689 / SK2).